The primary structure comprises 185 residues: Threonylcarbamoyl-AMP synthase (185 aa).

Positions 4 to 185 (DWRVQQVARV…LRSGEVIRPA (182 aa)) constitute a YrdC-like domain.

The protein belongs to the SUA5 family. TsaC subfamily.

The protein localises to the cytoplasm. The catalysed reaction is L-threonine + hydrogencarbonate + ATP = L-threonylcarbamoyladenylate + diphosphate + H2O. In terms of biological role, required for the formation of a threonylcarbamoyl group on adenosine at position 37 (t(6)A37) in tRNAs that read codons beginning with adenine. Catalyzes the conversion of L-threonine, HCO(3)(-)/CO(2) and ATP to give threonylcarbamoyl-AMP (TC-AMP) as the acyladenylate intermediate, with the release of diphosphate. The chain is Threonylcarbamoyl-AMP synthase from Stutzerimonas stutzeri (strain A1501) (Pseudomonas stutzeri).